The primary structure comprises 401 residues: Imidazolonepropionase (401 aa).

2 residues coordinate Fe(3+): histidine 70 and histidine 72. Zn(2+) contacts are provided by histidine 70 and histidine 72. Positions 79, 142, and 175 each coordinate 4-imidazolone-5-propanoate. Tyrosine 142 lines the N-formimidoyl-L-glutamate pocket. Histidine 238 serves as a coordination point for Fe(3+). Histidine 238 is a binding site for Zn(2+). 4-imidazolone-5-propanoate is bound at residue glutamine 241. Aspartate 313 is a Fe(3+) binding site. Aspartate 313 contacts Zn(2+). 2 residues coordinate N-formimidoyl-L-glutamate: asparagine 315 and glycine 317. Threonine 318 is a 4-imidazolone-5-propanoate binding site.

This sequence belongs to the metallo-dependent hydrolases superfamily. HutI family. It depends on Zn(2+) as a cofactor. Requires Fe(3+) as cofactor.

It is found in the cytoplasm. The enzyme catalyses 4-imidazolone-5-propanoate + H2O = N-formimidoyl-L-glutamate. It functions in the pathway amino-acid degradation; L-histidine degradation into L-glutamate; N-formimidoyl-L-glutamate from L-histidine: step 3/3. Functionally, catalyzes the hydrolytic cleavage of the carbon-nitrogen bond in imidazolone-5-propanoate to yield N-formimidoyl-L-glutamate. It is the third step in the universal histidine degradation pathway. The polypeptide is Imidazolonepropionase (Xanthomonas euvesicatoria pv. vesicatoria (strain 85-10) (Xanthomonas campestris pv. vesicatoria)).